The chain runs to 487 residues: Serine/threonine-protein kinase 4 (487 aa).

Residue Met1 is modified to N-acetylmethionine. The residue at position 3 (Thr3) is a Phosphothreonine. The Protein kinase domain maps to 30–281 (FDVLEKLGEG…ATQLLQHPFV (252 aa)). Residues 36–44 (LGEGSYGSV) and Lys59 each bind ATP. The active-site Proton acceptor is Asp149. The residue at position 183 (Thr183) is a Phosphothreonine; by autocatalysis. Residue Ser265 is modified to Phosphoserine. A coiled-coil region spans residues 290–310 (LRDLINEAMDVKLKRQESQQR). The segment covering 303–312 (KRQESQQREV) has biased composition (basic and acidic residues). The disordered stretch occupies residues 303–332 (KRQESQQREVDQDDEENSEEDEMDSGTMVR). Positions 313 to 326 (DQDDEENSEEDEMD) are enriched in acidic residues. A Phosphoserine modification is found at Ser320. Phosphothreonine is present on residues Thr340 and Thr367. Residue Thr387 is modified to Phosphothreonine; by PKB/AKT1. A phosphoserine mark is found at Ser410 and Ser414. Tyr433 carries the post-translational modification Phosphotyrosine. The SARAH domain occupies 433 to 480 (YEFLKSWTVEDLQKRLLALDPMMEQEIEEIRQKYQSKRQPILDAIEAK).

This sequence belongs to the protein kinase superfamily. STE Ser/Thr protein kinase family. STE20 subfamily. In terms of assembly, homodimer; mediated via the coiled-coil region. Interacts with NORE1, which inhibits autoactivation. Interacts with and stabilizes SAV1. Interacts with RASSF1. Interacts with FOXO3. Interacts with RASSF2 (via SARAH domain). Interacts with AR, PKB/AKT1, TNNI3 and SIRT1. Interacts with DLG5 (via PDZ domain 3). Interacts with MARK3 and SCRIB in the presence of DLG5. Mg(2+) is required as a cofactor. Post-translationally, autophosphorylated on serine and threonine residues. Phosphorylation at Thr-387 by PKB/AKT1, leads to inhibition of its: kinase activity, nuclear translocation and autophosphorylation at Thr-183. It also diminishes its cleavage by caspases and its ability to phosphorylate FOXO3. In terms of processing, proteolytically cleaved by caspase-3 during apoptosis at Asp-326 and Asp-349 resulting in a 37 kDa or a 39 kDa subunit respectively. The 39 kDa subunit is further cleaved into the 37 kDa form. Proteolytic cleavage results in kinase activation and nuclear translocation of the truncated form (MST1/N). It is less likely that cleavage at Asp-349 is a prerequisite for activation as this site is not conserved in the murine ortholog.

Its subcellular location is the cytoplasm. It is found in the nucleus. The catalysed reaction is L-seryl-[protein] + ATP = O-phospho-L-seryl-[protein] + ADP + H(+). It catalyses the reaction L-threonyl-[protein] + ATP = O-phospho-L-threonyl-[protein] + ADP + H(+). Inhibited by the C-terminal non-catalytic region. Activated by caspase-cleavage. Full activation also requires homodimerization and autophosphorylation of Thr-183. Activated by RASSF1 which acts by preventing its dephosphorylation. Stress-activated, pro-apoptotic kinase which, following caspase-cleavage, enters the nucleus and induces chromatin condensation followed by internucleosomal DNA fragmentation. Key component of the Hippo signaling pathway which plays a pivotal role in organ size control and tumor suppression by restricting proliferation and promoting apoptosis. The core of this pathway is composed of a kinase cascade wherein STK3/MST2 and STK4/MST1, in complex with its regulatory protein SAV1, phosphorylates and activates LATS1/2 in complex with its regulatory protein MOB1, which in turn phosphorylates and inactivates YAP1 oncoprotein and WWTR1/TAZ. Phosphorylation of YAP1 by LATS2 inhibits its translocation into the nucleus to regulate cellular genes important for cell proliferation, cell death, and cell migration. STK3/MST2 and STK4/MST1 are required to repress proliferation of mature hepatocytes, to prevent activation of facultative adult liver stem cells (oval cells), and to inhibit tumor formation. Phosphorylates 'Ser-14' of histone H2B (H2BS14ph) during apoptosis. Phosphorylates FOXO3 upon oxidative stress, which results in its nuclear translocation and cell death initiation. Phosphorylates MOBKL1A, MOBKL1B and RASSF2. Phosphorylates TNNI3 (cardiac Tn-I) and alters its binding affinity to TNNC1 (cardiac Tn-C) and TNNT2 (cardiac Tn-T). Phosphorylates FOXO1 on 'Ser-212' and regulates its activation and stimulates transcription of PMAIP1 in a FOXO1-dependent manner. Phosphorylates SIRT1 and inhibits SIRT1-mediated p53/TP53 deacetylation, thereby promoting p53/TP53 dependent transcription and apoptosis upon DNA damage. Acts as an inhibitor of PKB/AKT1. Phosphorylates AR on 'Ser-650' and suppresses its activity by intersecting with PKB/AKT1 signaling and antagonizing formation of AR-chromatin complexes. This is Serine/threonine-protein kinase 4 (STK4) from Macaca mulatta (Rhesus macaque).